The sequence spans 325 residues: HTH-type transcriptional regulator VqsM (325 aa).

One can recognise an HTH araC/xylS-type domain in the interval 226–323 (QRIELFLDSI…GQSTTEFRNS (98 aa)). 2 consecutive DNA-binding regions (H-T-H motif) follow at residues 243-264 (VTTA…ADEG) and 290-313 (VDRI…RRWT).

Transcriptional regulator involved in both the repression (at least 99 genes, such as mexR and algU) and in the activation (at least 203 genes, such as mvfR, rsaL, vqsR and rpoS) of regulatory or putative regulatory proteins which are implicated in quorum sensing, virulence and multidrug resistance. This is HTH-type transcriptional regulator VqsM (vqsM) from Pseudomonas aeruginosa (strain ATCC 15692 / DSM 22644 / CIP 104116 / JCM 14847 / LMG 12228 / 1C / PRS 101 / PAO1).